The chain runs to 418 residues: Putative ion-transport protein YfeO (418 aa).

The next 12 helical transmembrane spans lie at 10–30 (LLLS…LIVV), 54–74 (DSPL…GLVI), 99–119 (ALPG…SLGP), 120–140 (EHPI…RLLP), 149–169 (ILAS…AALI), 186–206 (LFAP…FFHP), 223–243 (ILSG…AVWC), 258–278 (VLVL…GGPV), 300–320 (DYFL…ASGF), 322–342 (GGRI…LHEH), 343–363 (VPAV…VLVV), and 371–391 (LFMA…CIVM).

The protein belongs to the chloride channel (TC 2.A.49) family.

It is found in the cell membrane. This is Putative ion-transport protein YfeO from Escherichia coli O9:H4 (strain HS).